A 1359-amino-acid chain; its full sequence is Nuclear protein STH1/NPS1 (1359 aa).

The residue at position 38 (Ser-38) is a Phosphoserine. Residues 307–383 enclose the HSA domain; that stretch reads LERQQLLEKR…AKQRLAALKS (77 aa). One can recognise a Helicase ATP-binding domain in the interval 482 to 647; it reads VSLYNNHLNG…WALLNFVLPK (166 aa). 495–502 lines the ATP pocket; that stretch reads DEMGLGKT. The DEGH box signature appears at 597–600; it reads DEGH. The 162-residue stretch at 795-956 folds into the Helicase C-terminal domain; that stretch reads LLDRVLPKFK…NKSTAEEQEA (162 aa). The segment at 1090-1246 is disordered; the sequence is RERRRLRQNG…TAAKKTKTKS (157 aa). Residues 1108 to 1126 show a composition bias toward polar residues; that stretch reads LENTPEASETSLIENNSFT. Basic residues-rich tracts occupy residues 1143–1154 and 1198–1210; these read RSKRRSSRKKRT and KKKK…KIKL. Positions 1219–1232 are enriched in basic and acidic residues; it reads NDGKRAEEKPESKS. Residues 1233 to 1246 are compositionally biased toward basic residues; it reads PAKKTAAKKTKTKS. The 101-residue stretch at 1257-1357 folds into the Bromo domain; that stretch reads KLVEEMREQL…EFTDEWFKEH (101 aa).

It belongs to the SNF2/RAD54 helicase family. Interacts directly with SFH1, CSE4, histones H3, H4 and H2B, and via its N-terminus, with RSC8. Interacts with LDB7, NPL6 and RTT102. Component of the two forms of the RSC complex composed of at least either RSC1 or RSC2, and ARP7, ARP9, LDB7, NPL6, RSC3, RSC30, RSC4, RSC58, RSC6, RSC8, RSC9, SFH1, STH1, HTL1 and probably RTT102. The complexes interact with histone and histone variant components of centromeric chromatin.

The protein localises to the nucleus. The catalysed reaction is ATP + H2O = ADP + phosphate + H(+). Functionally, catalytic component of the chromatin structure-remodeling complex (RSC), which is involved in transcription regulation and nucleosome positioning. RSC is responsible for the transfer of a histone octamer from a nucleosome core particle to naked DNA. The reaction requires ATP and involves an activated RSC-nucleosome intermediate. Remodeling reaction also involves DNA translocation, DNA twist and conformational change. As a reconfigurer of centromeric and flanking nucleosomes, RSC complex is required both for proper kinetochore function in chromosome segregation and, via a PKC1-dependent signaling pathway, for organization of the cellular cytoskeleton. This subunit is the essential ATPase of the complex. It is a DNA translocase capable of nucleosome remodeling. Required for full expression of early meiotic genes. Essential for mitotic growth and repression of CHA1 expression. Also involved in G2 phase control. The polypeptide is Nuclear protein STH1/NPS1 (STH1) (Saccharomyces cerevisiae (strain ATCC 204508 / S288c) (Baker's yeast)).